The following is a 152-amino-acid chain: Ribonuclease pancreatic gamma-type (152 aa).

The first 25 residues, 1–25, serve as a signal peptide directing secretion; the sequence is MGLEKSLFLFSLLVLVLGWVQPSLG. Residues lysine 35 and arginine 38 each coordinate substrate. Histidine 40 (proton acceptor) is an active-site residue. Disulfide bonds link cysteine 54–cysteine 112, cysteine 68–cysteine 123, cysteine 86–cysteine 138, and cysteine 93–cysteine 100. Residues 69–73, lysine 94, and arginine 113 each bind substrate; that span reads KSMNT. Histidine 147 functions as the Proton donor in the catalytic mechanism.

It belongs to the pancreatic ribonuclease family. In terms of assembly, monomer.

It is found in the secreted. The catalysed reaction is an [RNA] containing cytidine + H2O = an [RNA]-3'-cytidine-3'-phosphate + a 5'-hydroxy-ribonucleotide-3'-[RNA].. It catalyses the reaction an [RNA] containing uridine + H2O = an [RNA]-3'-uridine-3'-phosphate + a 5'-hydroxy-ribonucleotide-3'-[RNA].. Its function is as follows. Endonuclease that catalyzes the cleavage of RNA on the 3' side of pyrimidine nucleotides. Acts on single-stranded and double-stranded RNA. The polypeptide is Ribonuclease pancreatic gamma-type (Rattus norvegicus (Rat)).